Reading from the N-terminus, the 127-residue chain is Large ribosomal subunit protein bL12 (127 aa).

It belongs to the bacterial ribosomal protein bL12 family. As to quaternary structure, homodimer. Part of the ribosomal stalk of the 50S ribosomal subunit. Forms a multimeric L10(L12)X complex, where L10 forms an elongated spine to which 2 to 4 L12 dimers bind in a sequential fashion. Binds GTP-bound translation factors.

Its function is as follows. Forms part of the ribosomal stalk which helps the ribosome interact with GTP-bound translation factors. Is thus essential for accurate translation. The protein is Large ribosomal subunit protein bL12 of Desulforapulum autotrophicum (strain ATCC 43914 / DSM 3382 / VKM B-1955 / HRM2) (Desulfobacterium autotrophicum).